The sequence spans 257 residues: Phycoerythrobilin:ferredoxin oxidoreductase (257 aa).

The protein belongs to the HY2 family.

It carries out the reaction (3Z)-phycoerythrobilin + oxidized 2[4Fe-4S]-[ferredoxin] = 15,16-dihydrobiliverdin + reduced 2[4Fe-4S]-[ferredoxin] + 2 H(+). Functionally, catalyzes the two-electron reduction of the C2 and C3(1) diene system of 15,16-dihydrobiliverdin. This is Phycoerythrobilin:ferredoxin oxidoreductase (pebB) from Synechococcus sp. (strain WH8020).